Reading from the N-terminus, the 264-residue chain is Caffeoyl-CoA O-methyltransferase 2 (264 aa).

Residues 1–20 (MATTATEATKTTAPAQEQQA) show a composition bias toward low complexity. The interval 1 to 37 (MATTATEATKTTAPAQEQQANGNGNGEQKTRHSEVGH) is disordered. The span at 28–37 (QKTRHSEVGH) shows a compositional bias: basic and acidic residues. Lys-38 provides a ligand contact to substrate. S-adenosyl-L-methionine contacts are provided by residues Thr-80, Glu-102, 104–105 (GV), Ser-110, Asp-128, and Ala-157. Asp-180 is a substrate binding site. Asp-180 is an a divalent metal cation binding site. Position 182 (Asp-182) interacts with S-adenosyl-L-methionine. Residues Asp-206 and Asn-207 each contribute to the a divalent metal cation site. Residue Asn-211 participates in substrate binding.

The protein belongs to the class I-like SAM-binding methyltransferase superfamily. Cation-dependent O-methyltransferase family. CCoAMT subfamily. Requires a divalent metal cation as cofactor.

It catalyses the reaction (E)-caffeoyl-CoA + S-adenosyl-L-methionine = (E)-feruloyl-CoA + S-adenosyl-L-homocysteine + H(+). It functions in the pathway aromatic compound metabolism; phenylpropanoid biosynthesis. Methylates caffeoyl-CoA to feruloyl-CoA and 5-hydroxyferuloyl-CoA to sinapoyl-CoA. Plays a role in the synthesis of feruloylated polysaccharides. Involved in the reinforcement of the plant cell wall. Also involved in the responding to wounding or pathogen challenge by the increased formation of cell wall-bound ferulic acid polymers. This chain is Caffeoyl-CoA O-methyltransferase 2 (CCOAOMT2), found in Zea mays (Maize).